We begin with the raw amino-acid sequence, 180 residues long: Large ribosomal subunit protein uL10 (180 aa).

This sequence belongs to the universal ribosomal protein uL10 family. Part of the ribosomal stalk of the 50S ribosomal subunit. The N-terminus interacts with L11 and the large rRNA to form the base of the stalk. The C-terminus forms an elongated spine to which L12 dimers bind in a sequential fashion forming a multimeric L10(L12)X complex.

In terms of biological role, forms part of the ribosomal stalk, playing a central role in the interaction of the ribosome with GTP-bound translation factors. The protein is Large ribosomal subunit protein uL10 (rplJ) of Treponema pallidum (strain Nichols).